A 425-amino-acid polypeptide reads, in one-letter code: COBRA-like protein 4 (425 aa).

The first 27 residues, 1–27, serve as a signal peptide directing secretion; the sequence is MAIGVGGCCAVLLAAALLFSSPATTYA. N36, N163, N171, N319, and N352 each carry an N-linked (GlcNAc...) asparagine glycan.

The protein belongs to the COBRA family.

The chain is COBRA-like protein 4 (BC1L9) from Oryza sativa subsp. japonica (Rice).